Here is a 147-residue protein sequence, read N- to C-terminus: Large ribosomal subunit protein bL9 (147 aa).

It belongs to the bacterial ribosomal protein bL9 family.

Binds to the 23S rRNA. The sequence is that of Large ribosomal subunit protein bL9 from Nitratiruptor sp. (strain SB155-2).